The primary structure comprises 85 residues: MKTDIHPKYAPVVFRDLASGATFLTRSTVSSSKTIEWEDGNTYAVIDVEISSESHPFYTGKQRIMDSAGRVEKFNSRYAGFGTKK.

This sequence belongs to the bacterial ribosomal protein bL31 family. Type B subfamily. As to quaternary structure, part of the 50S ribosomal subunit.

This chain is Large ribosomal subunit protein bL31B, found in Clavibacter michiganensis subsp. michiganensis (strain NCPPB 382).